A 193-amino-acid chain; its full sequence is Hypoxanthine/guanine phosphoribosyltransferase (193 aa).

It belongs to the purine/pyrimidine phosphoribosyltransferase family. Archaeal HPRT subfamily. As to quaternary structure, homodimer.

Its subcellular location is the cytoplasm. The catalysed reaction is IMP + diphosphate = hypoxanthine + 5-phospho-alpha-D-ribose 1-diphosphate. It catalyses the reaction GMP + diphosphate = guanine + 5-phospho-alpha-D-ribose 1-diphosphate. Its pathway is purine metabolism; IMP biosynthesis via salvage pathway; IMP from hypoxanthine: step 1/1. Functionally, catalyzes a salvage reaction resulting in the formation of IMP that is energically less costly than de novo synthesis. The protein is Hypoxanthine/guanine phosphoribosyltransferase of Methanothermobacter thermautotrophicus (strain ATCC 29096 / DSM 1053 / JCM 10044 / NBRC 100330 / Delta H) (Methanobacterium thermoautotrophicum).